An 873-amino-acid polypeptide reads, in one-letter code: Probable beta-glucosidase A (873 aa).

Positions 1 to 19 (MRFGWLEVAALTAASVANA) are cleaved as a signal peptide. 3 N-linked (GlcNAc...) asparagine glycosylation sites follow: Asn-71, Asn-222, and Asn-263. Asp-291 is an active-site residue. N-linked (GlcNAc...) asparagine glycans are attached at residues Asn-326, Asn-333, Asn-365, Asn-453, Asn-534, Asn-553, Asn-575, Asn-679, and Asn-725. Residues 730–765 (EDSSDDPNYGWEDSEYIPEGARDGSPQPLLKAGGAP) are disordered.

This sequence belongs to the glycosyl hydrolase 3 family.

The protein resides in the secreted. The catalysed reaction is Hydrolysis of terminal, non-reducing beta-D-glucosyl residues with release of beta-D-glucose.. The protein operates within glycan metabolism; cellulose degradation. Its function is as follows. Beta-glucosidases are one of a number of cellulolytic enzymes involved in the degradation of cellulosic biomass. Catalyzes the last step releasing glucose from the inhibitory cellobiose. This Neosartorya fischeri (strain ATCC 1020 / DSM 3700 / CBS 544.65 / FGSC A1164 / JCM 1740 / NRRL 181 / WB 181) (Aspergillus fischerianus) protein is Probable beta-glucosidase A (bglA).